We begin with the raw amino-acid sequence, 139 residues long: Large ribosomal subunit protein bL17 (139 aa).

The segment at 120–139 (EDAKGRDSGPTQDNSEAEAA) is disordered.

Part of the 50S ribosomal subunit. Contacts protein L32. May be methylated thrice, on undetermined residues.

In Rhodopseudomonas palustris (strain ATCC BAA-98 / CGA009), this protein is Large ribosomal subunit protein bL17.